The chain runs to 259 residues: Protein-tyrosine phosphatase RolB (259 aa).

Positions 219–259 (GISRPAASSPEPDLTLRLSGPDQEGEEGVMKPAAVNLKKEA) are disordered.

The enzyme catalyses O-phospho-L-tyrosyl-[protein] + H2O = L-tyrosyl-[protein] + phosphate. Functionally, induces differentiation and growth of neoplastic roots (hairy roots). Seems to function as a tyrosine phosphatase. The polypeptide is Protein-tyrosine phosphatase RolB (rolB) (Rhizobium rhizogenes (Agrobacterium rhizogenes)).